A 62-amino-acid polypeptide reads, in one-letter code: Keratin-associated protein 8-1 (62 aa).

Positions 12 to 53 (GCYWGSYGYPLGYSVGCGYGSTYSPVGYGFGYGYNGSGAFGC) are 12 X 2 AA repeats of G-[YCGS].

This sequence belongs to the KRTAP type 8 family. In terms of assembly, interacts with wool keratins. As to expression, wool.

In the wool cortex, wool keratin intermediate filaments are embedded in an interfilamentous matrix, consisting of hair keratin-associated proteins (KRTAP), which are essential for the formation of a rigid and resistant wool shaft through their extensive disulfide bond cross-linking with abundant cysteine residues of wool keratins. The matrix proteins include the high-sulfur and high-glycine-tyrosine keratins. The polypeptide is Keratin-associated protein 8-1 (KRTAP8-1) (Ovis aries (Sheep)).